We begin with the raw amino-acid sequence, 300 residues long: GTPase Era (300 aa).

Positions 4–172 (KSGFVALAGK…LEKIKEELPE (169 aa)) constitute an Era-type G domain. A G1 region spans residues 12–19 (GKPNVGKS). Residue 12-19 (GKPNVGKS) coordinates GTP. The interval 38–42 (QTTRN) is G2. The G3 stretch occupies residues 59-62 (DTPG). GTP contacts are provided by residues 59–63 (DTPGI) and 121–124 (NKID). The G4 stretch occupies residues 121–124 (NKID). The interval 151-153 (ISA) is G5. The 86-residue stretch at 195-280 (IREKIFHLTR…YLDLNVKVKE (86 aa)) folds into the KH type-2 domain.

It belongs to the TRAFAC class TrmE-Era-EngA-EngB-Septin-like GTPase superfamily. Era GTPase family. As to quaternary structure, monomer.

The protein localises to the cytoplasm. It localises to the cell inner membrane. An essential GTPase that binds both GDP and GTP, with rapid nucleotide exchange. Plays a role in 16S rRNA processing and 30S ribosomal subunit biogenesis and possibly also in cell cycle regulation and energy metabolism. In Thermotoga maritima (strain ATCC 43589 / DSM 3109 / JCM 10099 / NBRC 100826 / MSB8), this protein is GTPase Era.